A 64-amino-acid polypeptide reads, in one-letter code: Protein sigN173 (64 aa).

The polypeptide is Protein sigN173 (Dictyostelium discoideum (Social amoeba)).